The chain runs to 2528 residues: Highly reducing polyketide synthase pspA (2528 aa).

A disordered region spans residues 1 to 53 (MLAQDVEFVDLPPPEATAGAATTDNETSSFNSNPVPTPSEASSIGPPHQLPVP). Polar residues predominate over residues 24-42 (DNETSSFNSNPVPTPSEAS). The Ketosynthase family 3 (KS3) domain maps to 63-483 (VEPMAICGMA…GSNAHVLLGS (421 aa)). Residues cysteine 235, histidine 371, and histidine 406 each act as for beta-ketoacyl synthase activity in the active site. The interval 590–909 (TFTGQGAQWA…HKDLLKAVGE (320 aa)) is malonyl-CoA:ACP transacylase (MAT) domain. The interval 961–1089 (HDILGSRVLE…GQVCAGSDRE (129 aa)) is N-terminal hotdog fold. The tract at residues 961–1230 (HDILGSRVLE…VSNGHVTIDI (270 aa)) is dehydratase (DH) domain. Positions 961-1244 (HDILGSRVLE…MSAIGDAADA (284 aa)) constitute a PKS/mFAS DH domain. The active-site Proton acceptor; for dehydratase activity is the histidine 993. Residues 1099–1244 (PRQLSRRGWY…MSAIGDAADA (146 aa)) are C-terminal hotdog fold. Aspartate 1160 functions as the Proton donor; for dehydratase activity in the catalytic mechanism. The segment at 1409-1587 (VFLELLAHRK…GFSGINLVSH (179 aa)) is methyltransferase (CMet) domain. Residues 1803–2119 (GLVDTLCWKS…RGQHIGKIVI (317 aa)) form an enoyl reductase (ER) (ER) domain region. Residues 2143–2322 (RAYLFVGGLG…ASTVNIGVIQ (180 aa)) form a ketoreductase (KR) domain region. Positions 2447-2525 (ETAELLAGEI…DLGVLAQKKL (79 aa)) constitute a Carrier domain. At serine 2485 the chain carries O-(pantetheine 4'-phosphoryl)serine.

It catalyses the reaction 9 malonyl-CoA + acetyl-CoA + S-adenosyl-L-methionine + 13 NADPH + 20 H(+) = soppiline A + S-adenosyl-L-homocysteine + 9 CO2 + 13 NADP(+) + 10 CoA + 7 H2O. It participates in secondary metabolite biosynthesis. Highly reducing polyketide synthase; part of the gene cluster that mediates the biosynthesis of the alkylresorcinols called soppilines. The biosynthesis starts with the HR-PKS pspA-catalyzed carbon chain assembly through nine chain elongation cycles, using acetyl CoA and malonyl CoA as a starter and extender units, respectively, to produce the polyketide soppiline A. In the first round, the KR, DH, and CMeT domains work to produce 2-methyl-2-butenyl thioester. In rounds 2 to 5, the KR, DH, and ER domains fully catalyze the reduction of the elongated beta-ketothioester, resulting in the insertion of eight methylene units. The unusual Z,E,Z-triene motif is likely constructed during rounds 6 to 8. Typically, the DH domain introduces a double bond at an alpha,beta-position of an elongated polyketide chain, with the dehydration of a beta-hydroxy group. The last extension cycle would be carried out with L-oriented beta-ketoreduction by the KR domain to produce beta-hydroxy carboxylic acid soppiline A. The type III PKS pspB intercepts the elongated polyketide chain at round 8 from the HR-PKS pspA, followed by a tri-keto extension and decarboxylative aldol cyclization to produce 1,3,5-trisubstituted alkylresorcinol soppiline B. Subsequently, the cytochrome P450 monooxygenase pspC catalyzes three-step oxidations at the C-4 methyl group to carboxylic acid to yield soppiline C. The polypeptide is Highly reducing polyketide synthase pspA (Penicillium soppii).